Here is a 67-residue protein sequence, read N- to C-terminus: MPQLDTSTWFINIVSMILTLFIVFQLKISKHSYPTHPEVKTTKMTKHSAPWESKWTKIYSPLSLPQQ.

The helical transmembrane segment at 8-24 (TWFINIVSMILTLFIVF) threads the bilayer. N6-acetyllysine; alternate is present on Lys-54. The residue at position 54 (Lys-54) is an N6-succinyllysine; alternate. N6-acetyllysine is present on Lys-57.

It belongs to the ATPase protein 8 family. Component of the ATP synthase complex composed at least of ATP5F1A/subunit alpha, ATP5F1B/subunit beta, ATP5MC1/subunit c (homooctomer), MT-ATP6/subunit a, MT-ATP8/subunit 8, ATP5ME/subunit e, ATP5MF/subunit f, ATP5MG/subunit g, ATP5MK/subunit k, ATP5MJ/subunit j, ATP5F1C/subunit gamma, ATP5F1D/subunit delta, ATP5F1E/subunit epsilon, ATP5PF/subunit F6, ATP5PB/subunit b, ATP5PD/subunit d, ATP5PO/subunit OSCP. ATP synthase complex consists of a soluble F(1) head domain (subunits alpha(3) and beta(3)) - the catalytic core - and a membrane F(0) domain - the membrane proton channel (subunits c, a, 8, e, f, g, k and j). These two domains are linked by a central stalk (subunits gamma, delta, and epsilon) rotating inside the F1 region and a stationary peripheral stalk (subunits F6, b, d, and OSCP). Interacts with PRICKLE3.

It is found in the mitochondrion membrane. In terms of biological role, subunit 8, of the mitochondrial membrane ATP synthase complex (F(1)F(0) ATP synthase or Complex V) that produces ATP from ADP in the presence of a proton gradient across the membrane which is generated by electron transport complexes of the respiratory chain. ATP synthase complex consist of a soluble F(1) head domain - the catalytic core - and a membrane F(1) domain - the membrane proton channel. These two domains are linked by a central stalk rotating inside the F(1) region and a stationary peripheral stalk. During catalysis, ATP synthesis in the catalytic domain of F(1) is coupled via a rotary mechanism of the central stalk subunits to proton translocation. In vivo, can only synthesize ATP although its ATP hydrolase activity can be activated artificially in vitro. Part of the complex F(0) domain. This Equus caballus (Horse) protein is ATP synthase F(0) complex subunit 8.